The sequence spans 502 residues: ATP synthase subunit alpha (502 aa).

169–176 provides a ligand contact to ATP; the sequence is GDRQTGKT.

The protein belongs to the ATPase alpha/beta chains family. As to quaternary structure, F-type ATPases have 2 components, CF(1) - the catalytic core - and CF(0) - the membrane proton channel. CF(1) has five subunits: alpha(3), beta(3), gamma(1), delta(1), epsilon(1). CF(0) has three main subunits: a(1), b(2) and c(9-12). The alpha and beta chains form an alternating ring which encloses part of the gamma chain. CF(1) is attached to CF(0) by a central stalk formed by the gamma and epsilon chains, while a peripheral stalk is formed by the delta and b chains.

The protein resides in the cell inner membrane. It carries out the reaction ATP + H2O + 4 H(+)(in) = ADP + phosphate + 5 H(+)(out). In terms of biological role, produces ATP from ADP in the presence of a proton gradient across the membrane. The alpha chain is a regulatory subunit. The protein is ATP synthase subunit alpha of Pelobacter propionicus (strain DSM 2379 / NBRC 103807 / OttBd1).